The following is a 315-amino-acid chain: Malate dehydrogenase (315 aa).

NAD(+)-binding positions include 10-15 (GAGNVG) and Asp34. Substrate contacts are provided by Arg85 and Arg91. NAD(+) is bound by residues Asn98 and 121–123 (VSN). Residues Asn123 and Arg154 each contribute to the substrate site. His178 functions as the Proton acceptor in the catalytic mechanism.

Belongs to the LDH/MDH superfamily. MDH type 3 family.

It catalyses the reaction (S)-malate + NAD(+) = oxaloacetate + NADH + H(+). Functionally, catalyzes the reversible oxidation of malate to oxaloacetate. This is Malate dehydrogenase from Rhodopirellula baltica (strain DSM 10527 / NCIMB 13988 / SH1).